Reading from the N-terminus, the 194-residue chain is uncharacterized protein (194 aa).

Residues 6–66 (EFDTALVLHR…SAVKSYLEGK (61 aa)) form the HTH tetR-type domain. Residues 29–48 (SLQDLLSHLGIARQSLYDTY) constitute a DNA-binding region (H-T-H motif).

This is an uncharacterized protein from Bacillus subtilis (strain 168).